The sequence spans 383 residues: ATP phosphoribosyltransferase regulatory subunit (383 aa).

Belongs to the class-II aminoacyl-tRNA synthetase family. HisZ subfamily. In terms of assembly, heteromultimer composed of HisG and HisZ subunits.

The protein resides in the cytoplasm. It functions in the pathway amino-acid biosynthesis; L-histidine biosynthesis; L-histidine from 5-phospho-alpha-D-ribose 1-diphosphate: step 1/9. In terms of biological role, required for the first step of histidine biosynthesis. May allow the feedback regulation of ATP phosphoribosyltransferase activity by histidine. The chain is ATP phosphoribosyltransferase regulatory subunit from Janthinobacterium sp. (strain Marseille) (Minibacterium massiliensis).